The chain runs to 146 residues: Large ribosomal subunit protein uL15 (146 aa).

Basic and acidic residues predominate over residues 1-13; sequence MKLHELHSAEGSR. Positions 1 to 55 are disordered; the sequence is MKLHELHSAEGSRRNRKRVGRGTSSGYGKTSGRGQKGQLARQGGHTRLGFEGGQM. The segment covering 23–35 has biased composition (gly residues); that stretch reads TSSGYGKTSGRGQ.

The protein belongs to the universal ribosomal protein uL15 family. In terms of assembly, part of the 50S ribosomal subunit.

Its function is as follows. Binds to the 23S rRNA. This is Large ribosomal subunit protein uL15 from Lactobacillus helveticus (strain DPC 4571).